Consider the following 358-residue polypeptide: Serine/threonine-protein phosphatase 2A activator 2 (358 aa).

The protein belongs to the PTPA-type PPIase family.

It localises to the cytoplasm. It carries out the reaction [protein]-peptidylproline (omega=180) = [protein]-peptidylproline (omega=0). In terms of biological role, PPIases accelerate the folding of proteins. It catalyzes the cis-trans isomerization of proline imidic peptide bonds in oligopeptides. Acts as a regulatory subunit for PP2A-like phosphatases modulating their activity or substrate specificity, probably by inducing a conformational change in the catalytic subunit, a direct target of the PPIase. Can reactivate inactive phosphatase PP2A-phosphatase methylesterase complexes (PP2Ai) in presence of ATP and Mg(2+) by dissociating the inactive form from the complex. In Candida albicans (strain SC5314 / ATCC MYA-2876) (Yeast), this protein is Serine/threonine-protein phosphatase 2A activator 2 (RRD2).